The chain runs to 72 residues: Translation initiation factor IF-1 (72 aa).

The S1-like domain occupies 1–72; that stretch reads MPKDDSIEVE…TRGRITYRAK (72 aa).

The protein belongs to the IF-1 family. Component of the 30S ribosomal translation pre-initiation complex which assembles on the 30S ribosome in the order IF-2 and IF-3, IF-1 and N-formylmethionyl-tRNA(fMet); mRNA recruitment can occur at any time during PIC assembly.

The protein resides in the cytoplasm. In terms of biological role, one of the essential components for the initiation of protein synthesis. Stabilizes the binding of IF-2 and IF-3 on the 30S subunit to which N-formylmethionyl-tRNA(fMet) subsequently binds. Helps modulate mRNA selection, yielding the 30S pre-initiation complex (PIC). Upon addition of the 50S ribosomal subunit IF-1, IF-2 and IF-3 are released leaving the mature 70S translation initiation complex. The protein is Translation initiation factor IF-1 of Myxococcus xanthus (strain DK1622).